The sequence spans 152 residues: Protein SprT-like (152 aa).

The SprT-like domain occupies 7 to 147; it reads QRLVEEVSLQ…CGKCKGKLKP (141 aa). H67 serves as a coordination point for Zn(2+). The active site involves E68. H71 is a Zn(2+) binding site.

The protein belongs to the SprT family. Zn(2+) is required as a cofactor.

The protein localises to the cytoplasm. This Bacillus cereus (strain B4264) protein is Protein SprT-like.